A 537-amino-acid chain; its full sequence is Protoporphyrinogen oxidase 1, chloroplastic (537 aa).

Residues 1-34 (MELSLLRPTTQSLLPSFSKPNLRLNVYKPLRLRC) constitute a chloroplast transit peptide. Position 35 is an N-acetylserine (Ser-35). FAD contacts are provided by residues 63 to 68 (GGGISG), 90 to 91 (EA), and 112 to 115 (GPNS). Basic and acidic residues predominate over residues 256–268 (RKNAPKAERDPRL). Residues 256-275 (RKNAPKAERDPRLPKPQGQT) form a disordered region. Residue 511-513 (VAL) participates in FAD binding.

It belongs to the protoporphyrinogen/coproporphyrinogen oxidase family. Protoporphyrinogen oxidase subfamily. Requires FAD as cofactor. In terms of tissue distribution, expressed at high levels in the leaves and at low levels in the roots and floral buds.

The protein resides in the plastid. It localises to the chloroplast. It carries out the reaction protoporphyrinogen IX + 3 O2 = protoporphyrin IX + 3 H2O2. The protein operates within porphyrin-containing compound metabolism; protoporphyrin-IX biosynthesis; protoporphyrin-IX from protoporphyrinogen-IX: step 1/1. It functions in the pathway porphyrin-containing compound metabolism; chlorophyll biosynthesis. Inhibited by acifluorfen. Catalyzes the 6-electron oxidation of protoporphyrinogen-IX to form protoporphyrin-IX. This chain is Protoporphyrinogen oxidase 1, chloroplastic (PPOX1), found in Arabidopsis thaliana (Mouse-ear cress).